The following is a 343-amino-acid chain: Isopentenyl-diphosphate delta-isomerase (343 aa).

Arginine 9–lysine 10 provides a ligand contact to substrate. Residues serine 66, serine 67 to threonine 69, serine 98, and asparagine 126 each bind FMN. Position 98 to 100 (serine 98 to arginine 100) interacts with substrate. Glutamine 161 provides a ligand contact to substrate. Mg(2+) is bound at residue glutamate 162. FMN-binding positions include lysine 193, threonine 223, glycine 273–arginine 275, and alanine 294–alanine 295.

This sequence belongs to the IPP isomerase type 2 family. As to quaternary structure, homooctamer. Dimer of tetramers. It depends on FMN as a cofactor. NADPH is required as a cofactor. Requires Mg(2+) as cofactor.

It is found in the cytoplasm. The catalysed reaction is isopentenyl diphosphate = dimethylallyl diphosphate. Functionally, involved in the biosynthesis of isoprenoids. Catalyzes the 1,3-allylic rearrangement of the homoallylic substrate isopentenyl (IPP) to its allylic isomer, dimethylallyl diphosphate (DMAPP). The sequence is that of Isopentenyl-diphosphate delta-isomerase from Hydrogenovibrio crunogenus (strain DSM 25203 / XCL-2) (Thiomicrospira crunogena).